Consider the following 493-residue polypeptide: DM7 family protein GM11958 (493 aa).

Residues 434-493 are disordered; the sequence is ATKSTDTRDDGMNTADYQSQFPELEQDSEPEPEPEPEPQTEDEGEDEDIEILASLCSGSI. Residues 457 to 483 show a composition bias toward acidic residues; the sequence is LEQDSEPEPEPEPEPQTEDEGEDEDIE.

It belongs to the DM7 family.

The protein is DM7 family protein GM11958 of Drosophila sechellia (Fruit fly).